The primary structure comprises 220 residues: Ribose-5-phosphate isomerase A (220 aa).

Substrate is bound by residues 28 to 31 (TGST), 81 to 84 (DGAD), and 94 to 97 (KGGG). The Proton acceptor role is filled by Glu103. Lys121 serves as a coordination point for substrate.

Belongs to the ribose 5-phosphate isomerase family. In terms of assembly, homodimer.

The enzyme catalyses aldehydo-D-ribose 5-phosphate = D-ribulose 5-phosphate. It functions in the pathway carbohydrate degradation; pentose phosphate pathway; D-ribose 5-phosphate from D-ribulose 5-phosphate (non-oxidative stage): step 1/1. Its function is as follows. Catalyzes the reversible conversion of ribose-5-phosphate to ribulose 5-phosphate. The sequence is that of Ribose-5-phosphate isomerase A from Yersinia enterocolitica serotype O:8 / biotype 1B (strain NCTC 13174 / 8081).